Consider the following 474-residue polypeptide: MVFFRSVSAFTRLRSRVQGQQSSLSNSVRWIQMQSSTDLDLKSQLQELIPEQQDRLKKLKSEHGKVQLGNITVDMVIGGMRGMTGLLWETSLLDPEEGIRFRGLSIPECQKVLPTAQSGAEPLPEGLLWLLLTGKVPSKEQVEALSKDLANRAAVPDYVYNAIDALPSTAHPMTQFASGVMALQVQSEFQKAYENGIHKSKFWEPTYEDCLNLIARVPVVAAYVYRRMYKNGDSIPSDKSLDYGANFSHMLGFDDEKVKELMRLYITIHSDHEGGNVSAHTGHLVGSALSDPYLSFAAALNGLAGPLHGLANQEVLLWIKSVVEECGEDISKEQLKEYVWKTLNSGKVIPGYGHGVLRNTDPRYVCQREFALKHLPDDPLFQLVSKLYEVVPPVLTELGKVKNPWPNVDAHSGVLLNHYGLTEARYYTVLFGVSRSLGICSQLIWDRALGLALERPKSVTMDWLEAHCKKASSA.

The N-terminal 16 residues, 1–16 (MVFFRSVSAFTRLRSR), are a transit peptide targeting the mitochondrion. Active-site residues include His308, His354, and Asp409.

It belongs to the citrate synthase family. As to quaternary structure, homodimer.

Its subcellular location is the mitochondrion matrix. It carries out the reaction oxaloacetate + acetyl-CoA + H2O = citrate + CoA + H(+). It participates in carbohydrate metabolism; tricarboxylic acid cycle; isocitrate from oxaloacetate: step 1/2. This Arabidopsis thaliana (Mouse-ear cress) protein is Citrate synthase 4, mitochondrial (CSY4).